The sequence spans 765 residues: uncharacterized protein (765 aa).

The N-terminal stretch at 1 to 22 (MKLKGFLAVGVSVFGFSGLLMA) is a signal peptide. A lipid anchor (N-palmitoyl cysteine) is attached at cysteine 23. Residue cysteine 23 is the site of S-diacylglycerol cysteine attachment. Disordered regions lie at residues 177 to 203 (EGTPTSTTVQATVSSRSAEKKGTLEIA) and 218 to 255 (TAQNNSNETTKEQKQVKRSSSSSSTTSTTGETKDTTKS). Positions 179–192 (TPTSTTVQATVSSR) are enriched in polar residues. Residues 236-247 (SSSSSSTTSTTG) are compositionally biased toward low complexity.

It belongs to the MG185/MG260 family.

The protein resides in the cell membrane. This is an uncharacterized protein from Mycoplasma genitalium (strain ATCC 33530 / DSM 19775 / NCTC 10195 / G37) (Mycoplasmoides genitalium).